A 293-amino-acid chain; its full sequence is tRNA pseudouridine synthase B (293 aa).

Asp-38 acts as the Nucleophile in catalysis.

This sequence belongs to the pseudouridine synthase TruB family. Type 1 subfamily.

The enzyme catalyses uridine(55) in tRNA = pseudouridine(55) in tRNA. Responsible for synthesis of pseudouridine from uracil-55 in the psi GC loop of transfer RNAs. The chain is tRNA pseudouridine synthase B from Trichormus variabilis (strain ATCC 29413 / PCC 7937) (Anabaena variabilis).